We begin with the raw amino-acid sequence, 846 residues long: Putative transcriptional regulator tpeD (846 aa).

The BED-type; degenerate zinc-finger motif lies at 104–166 (KHQSECWQHF…NCRKSVPVSK (63 aa)). The disordered stretch occupies residues 734-846 (RAREERDAQQ…RDEDFVYETP (113 aa)). Positions 756–769 (PISDSEEAESEDES) are enriched in acidic residues. The segment covering 773-786 (PQSPQASQARSQRS) has biased composition (low complexity). Positions 797–809 (PLIELDGNEEDEV) are enriched in acidic residues.

The protein resides in the nucleus. Functionally, putative transcriptional regulator; part of the gene cluster that mediates the biosynthesis of polyesters containing 2,4-dihydroxy-6-(2-hydroxypropyl)benzoate and 3-hydroxybutyrate moieties, such as talapolyester G, 15G256beta and 15G256beta-2; as well as to oxidized derivatives such as 15G256alpha. In Talaromyces stipitatus (strain ATCC 10500 / CBS 375.48 / QM 6759 / NRRL 1006) (Penicillium stipitatum), this protein is Putative transcriptional regulator tpeD.